The chain runs to 183 residues: Gamma-crystallin N (183 aa).

Beta/gamma crystallin 'Greek key' domains are found at residues 6–46 (GKII…RVET), 47–89 (GAWI…KPVR), 95–136 (YRLE…KVYG), and 138–180 (GAWV…RRVV).

Belongs to the beta/gamma-crystallin family. In terms of assembly, monomer.

Its function is as follows. Crystallins are the dominant structural components of the vertebrate eye lens. This is Gamma-crystallin N (crygn) from Xenopus tropicalis (Western clawed frog).